We begin with the raw amino-acid sequence, 348 residues long: Rhodopsin (348 aa).

An N-acetylmethionine modification is found at M1. Topologically, residues 1-36 (MNGTEGPNFYVPFSNKTGVVRSPFEYPQYYLAEPWQ) are extracellular. Residues N2 and N15 are each glycosylated (N-linked (GlcNAc...) asparagine). A helical membrane pass occupies residues 37 to 61 (FSMLAAYMFLLIVLGFPINFLTLYV). Residues 62–73 (TVQHKKLRTPLN) lie on the Cytoplasmic side of the membrane. A helical transmembrane segment spans residues 74-96 (YILLNLAVADLFMVFGGFTTTLY). Over 97–110 (TSLHGYFVFGPTGC) the chain is Extracellular. C110 and C187 are joined by a disulfide. Residues 111 to 133 (NLEGFFATLGGEIALWSLVVLAI) traverse the membrane as a helical segment. A 'Ionic lock' involved in activated form stabilization motif is present at residues 134-136 (ERY). At 134-152 (ERYVVVCKPMSNFRFGENH) the chain is on the cytoplasmic side. The helical transmembrane segment at 153 to 173 (AIMGVGLTWVMALACAAPPLV) threads the bilayer. At 174–202 (GWSRYIPEGMQCSCGIDYYTLKPEVNNES) the chain is on the extracellular side. Zn(2+) is bound at residue E201. The chain crosses the membrane as a helical span at residues 203-224 (FVIYMFVVHFTIPMIVIFFCYG). Residues 225–252 (QLVFTVKEAAAQQQESATTQKAEKEVTR) lie on the Cytoplasmic side of the membrane. A helical transmembrane segment spans residues 253–274 (MVIIMVIAFLICWVPYASVAFY). Over 275 to 286 (IFTHQGFNFGPI) the chain is Extracellular. Q279 serves as a coordination point for Zn(2+). The helical transmembrane segment at 287–308 (FMTLPAFFAKAAAIYNPVIYIM) threads the bilayer. K296 carries the N6-(retinylidene)lysine modification. Over 309–348 (MNKQFRTCMITTLCCGKNPLGDDEVSASASKTETSQVAPA) the chain is Cytoplasmic. 2 S-palmitoyl cysteine lipidation sites follow: C322 and C323. An interaction with SAG region spans residues 330 to 348 (DDEVSASASKTETSQVAPA). 2 positions are modified to phosphoserine: S334 and S338. Phosphothreonine is present on residues T340 and T342. S343 is modified (phosphoserine).

It belongs to the G-protein coupled receptor 1 family. Opsin subfamily. Homodimer. Interacts (phosphorylated form) with SAG. Interacts with GNAT1. Interacts with GNAT3. SAG and G-proteins compete for a common binding site. Interacts with GRK1. Interacts with PRCD; the interaction promotes PRCD stability. Forms a complex with ASAP1 and ARF4. Forms a complex with ASAP1, RAB11A, Rabin8/RAB3IP, ARF4 and RAB11FIP3; the complex regulates Golgi-to-cilia rhodopsin/RHO transport in photoreceptors. In terms of processing, phosphorylated on some or all of the serine and threonine residues present in the C-terminal region. Post-translationally, contains one covalently linked retinal chromophore. Upon light absorption, the covalently bound 11-cis-retinal is converted to all-trans-retinal. After hydrolysis of the Schiff base and release of the covalently bound all-trans-retinal, active rhodopsin is regenerated by binding of a fresh molecule of 11-cis-retinal.

The protein resides in the membrane. It is found in the cell projection. It localises to the cilium. Its subcellular location is the photoreceptor outer segment. In terms of biological role, photoreceptor required for image-forming vision at low light intensity. Required for photoreceptor cell viability after birth. Light-induced isomerization of 11-cis to all-trans retinal triggers a conformational change that activates signaling via G-proteins. Subsequent receptor phosphorylation mediates displacement of the bound G-protein alpha subunit by the arrestin SAG and terminates signaling. The protein is Rhodopsin (RHO) of Pagophilus groenlandicus (Harp seal).